An 83-amino-acid chain; its full sequence is Mu-theraphotoxin-Hhn2b 1 (83 aa).

The first 21 residues, 1 to 21 (MKASMFLALAGLVLLFVVCYA), serve as a signal peptide directing secretion. Residues 22 to 48 (SESEEKEFPRELISKIFAVDDFKGEER) constitute a propeptide that is removed on maturation. 3 disulfide bridges follow: cysteine 50/cysteine 65, cysteine 57/cysteine 70, and cysteine 64/cysteine 77. Leucine amide is present on leucine 81.

This sequence belongs to the neurotoxin 10 (Hwtx-1) family. 14 (Hntx-1) subfamily. In terms of assembly, monomer. In terms of tissue distribution, expressed by the venom gland.

Its subcellular location is the secreted. In terms of biological role, weakly blocks the rat SCN2A/SCN1B (Nav1.2/beta-1) sodium channel (IC(50)=68 uM) and the insect sodium channel para/tipE (IC(50)=4.3 uM), without altering the activation or inactivation kinetics (depressant toxin). The protein is Mu-theraphotoxin-Hhn2b 1 of Cyriopagopus hainanus (Chinese bird spider).